Consider the following 150-residue polypeptide: Viral late gene transcription factor 2 (150 aa).

It belongs to the orthopoxvirus VLTF-2/OPG126 family. As to quaternary structure, interacts with the late transcription elongation factor VLTF-4/OPG110. Interacts with the late transcription factors VLTF-1/OPG093.

Acts with RNA polymerase to initiate transcription from late gene promoters. This is Viral late gene transcription factor 2 (OPG126) from Monkeypox virus.